The sequence spans 75 residues: UPF0270 protein PSPTO_1630 (75 aa).

This sequence belongs to the UPF0270 family.

The sequence is that of UPF0270 protein PSPTO_1630 from Pseudomonas syringae pv. tomato (strain ATCC BAA-871 / DC3000).